The following is a 338-amino-acid chain: Ketol-acid reductoisomerase (NADP(+)) (338 aa).

Residues M1–T181 enclose the KARI N-terminal Rossmann domain. NADP(+) contacts are provided by residues Y24–Q27, R47, and S52. The active site involves H107. G133 contacts NADP(+). Residues N182–I327 enclose the KARI C-terminal knotted domain. D190, E194, E226, and E230 together coordinate Mg(2+). S251 provides a ligand contact to substrate.

This sequence belongs to the ketol-acid reductoisomerase family. Mg(2+) is required as a cofactor.

The enzyme catalyses (2R)-2,3-dihydroxy-3-methylbutanoate + NADP(+) = (2S)-2-acetolactate + NADPH + H(+). The catalysed reaction is (2R,3R)-2,3-dihydroxy-3-methylpentanoate + NADP(+) = (S)-2-ethyl-2-hydroxy-3-oxobutanoate + NADPH + H(+). It participates in amino-acid biosynthesis; L-isoleucine biosynthesis; L-isoleucine from 2-oxobutanoate: step 2/4. The protein operates within amino-acid biosynthesis; L-valine biosynthesis; L-valine from pyruvate: step 2/4. Functionally, involved in the biosynthesis of branched-chain amino acids (BCAA). Catalyzes an alkyl-migration followed by a ketol-acid reduction of (S)-2-acetolactate (S2AL) to yield (R)-2,3-dihydroxy-isovalerate. In the isomerase reaction, S2AL is rearranged via a Mg-dependent methyl migration to produce 3-hydroxy-3-methyl-2-ketobutyrate (HMKB). In the reductase reaction, this 2-ketoacid undergoes a metal-dependent reduction by NADPH to yield (R)-2,3-dihydroxy-isovalerate. This chain is Ketol-acid reductoisomerase (NADP(+)), found in Cupriavidus pinatubonensis (strain JMP 134 / LMG 1197) (Cupriavidus necator (strain JMP 134)).